A 285-amino-acid chain; its full sequence is Flagellar filament 30.7 kDa core protein (285 aa).

Belongs to the bacterial flagellin family. As to quaternary structure, the core of the flagellum consists of several antigenically related polypeptides. Post-translationally, glycosylated. Glycosylation is not essential for motility.

The protein localises to the periplasmic flagellum. It localises to the periplasm. Its function is as follows. Component of the core of the flagella. This Treponema maltophilum protein is Flagellar filament 30.7 kDa core protein (flaB3).